A 194-amino-acid chain; its full sequence is Early growth response protein 1 (194 aa).

3 consecutive C2H2-type zinc fingers follow at residues 1 to 18, 24 to 46, and 52 to 74; these read CDRRFSRSDELTRHIRIH, FQCRICMRNFSRSDHLTTHIRTH, and FACDICGRKFARSDERKRHTKIH.

It belongs to the EGR C2H2-type zinc-finger protein family.

It is found in the nucleus. The protein resides in the cytoplasm. Functionally, transcriptional regulator. Recognizes and binds to the DNA sequence 5'-GCG(T/G)GGGCG-3'(EGR-site) in the promoter region of target genes. Binds double-stranded target DNA, irrespective of the cytosine methylation status. Regulates the transcription of numerous target genes, and thereby plays an important role in regulating the response to growth factors, DNA damage, and ischemia. Plays a role in the regulation of cell survival, proliferation and cell death. Mediates responses to ischemia and hypoxia; regulates the expression of proteins that are involved in inflammatory processes. Plays a role in regulating the expression of circadian clock genes. The polypeptide is Early growth response protein 1 (EGR1) (Gallus gallus (Chicken)).